A 782-amino-acid chain; its full sequence is Spastin (782 aa).

The tract at residues 1-103 is disordered; that stretch reads MVRTKNQSSS…GNAPRGGNSS (103 aa). Topologically, residues 1–115 are cytoplasmic; that stretch reads MVRTKNQSSS…KQNLYVVSFP (115 aa). Residues 1–212 form a required for localization to punctate cytoplasmic foci region; the sequence is MVRTKNQSSS…RAIQPLEMAG (212 aa). Over residues 8–19 the composition is skewed to low complexity; sequence SSSSSASSSTKS. The span at 25–34 shows a compositional bias: polar residues; sequence GGTTNRSRSC. 2 stretches are compositionally biased toward low complexity: residues 44–75 and 84–93; these read SKSSSKPTSNNRQRTTTNNNTTAITTTPGSSP and TTDADLTPTS. The segment at residues 116–136 is an intramembrane region (helical); it reads IIFLFNVLRSLIYQLFCIFRY. Residues 137-782 lie on the Cytoplasmic side of the membrane; sequence LYGASTKVIY…WSQDYGDITI (646 aa). Residues 210–782 are sufficient for interaction with microtubules and microtubule severing; that stretch reads MAGNRAGGNY…WSQDYGDITI (573 aa). The 76-residue stretch at 235 to 310 folds into the MIT domain; that stretch reads HRRAFEYISK…SMARDRLHFL (76 aa). The segment at 325-479 is disordered; sequence KEQQQKKKSP…GSGSGASTPM (155 aa). The segment covering 334 to 343 has biased composition (low complexity); the sequence is PQQQPQQQQQ. 2 stretches are compositionally biased toward polar residues: residues 408-426 and 447-463; these read NKSQTLPRNLGSKTSSTSV and QFSSGRNTPPQRSRTPI. The tract at residues 465–479 is required for interaction with microtubules; that stretch reads NNAAGGSGSGASTPM. An ATP-binding site is contributed by 547-554; the sequence is GPPGNGKT.

It belongs to the AAA ATPase family. Spastin subfamily. Homohexamer. The homohexamer is stabilized by ATP-binding. The homohexamer may adopt a ring conformation through which microtubules pass prior to being severed. Interacts with microtubules. Interacts with atl; may be involved in microtubule dynamics.

It localises to the membrane. It is found in the cytoplasm. Its subcellular location is the cytoskeleton. The protein resides in the microtubule organizing center. The protein localises to the centrosome. It localises to the chromosome. It is found in the lipid droplet. The catalysed reaction is n ATP + n H2O + a microtubule = n ADP + n phosphate + (n+1) alpha/beta tubulin heterodimers.. ATP-dependent microtubule severing protein. Stimulates microtubule minus-end depolymerization and poleward microtubule flux in the mitotic spindle. Regulates microtubule stability in the neuromuscular junction synapse. Involved in lipid metabolism by regulating the size and distribution of lipid droplets. Involved in axon regeneration by regulating microtubule severing. In Drosophila grimshawi (Hawaiian fruit fly), this protein is Spastin.